Consider the following 291-residue polypeptide: Nitrogenase iron protein (291 aa).

11–18 contributes to the ATP binding site; the sequence is GKGGIGKS. C99 contacts [4Fe-4S] cluster. Residue R102 is modified to ADP-ribosylarginine; by dinitrogenase reductase ADP-ribosyltransferase. A [4Fe-4S] cluster-binding site is contributed by C133.

It belongs to the NifH/BchL/ChlL family. As to quaternary structure, homodimer. The cofactor is [4Fe-4S] cluster. Post-translationally, the reversible ADP-ribosylation of Arg-102 inactivates the nitrogenase reductase and regulates nitrogenase activity.

It catalyses the reaction N2 + 8 reduced [2Fe-2S]-[ferredoxin] + 16 ATP + 16 H2O = H2 + 8 oxidized [2Fe-2S]-[ferredoxin] + 2 NH4(+) + 16 ADP + 16 phosphate + 6 H(+). The key enzymatic reactions in nitrogen fixation are catalyzed by the nitrogenase complex, which has 2 components: the iron protein and the molybdenum-iron protein. The protein is Nitrogenase iron protein of Cereibacter sphaeroides (strain ATCC 17023 / DSM 158 / JCM 6121 / CCUG 31486 / LMG 2827 / NBRC 12203 / NCIMB 8253 / ATH 2.4.1.) (Rhodobacter sphaeroides).